The chain runs to 235 residues: 5'-methylthioadenosine/S-adenosylhomocysteine nucleosidase (235 aa).

Catalysis depends on Glu-12, which acts as the Proton acceptor. Substrate-binding positions include Gly-78, Met-153, and 174–175; that span reads ME. The active-site Proton donor is the Asp-198.

It belongs to the PNP/UDP phosphorylase family. MtnN subfamily.

The catalysed reaction is S-adenosyl-L-homocysteine + H2O = S-(5-deoxy-D-ribos-5-yl)-L-homocysteine + adenine. It catalyses the reaction S-methyl-5'-thioadenosine + H2O = 5-(methylsulfanyl)-D-ribose + adenine. It carries out the reaction 5'-deoxyadenosine + H2O = 5-deoxy-D-ribose + adenine. Its pathway is amino-acid biosynthesis; L-methionine biosynthesis via salvage pathway; S-methyl-5-thio-alpha-D-ribose 1-phosphate from S-methyl-5'-thioadenosine (hydrolase route): step 1/2. Its function is as follows. Catalyzes the irreversible cleavage of the glycosidic bond in both 5'-methylthioadenosine (MTA) and S-adenosylhomocysteine (SAH/AdoHcy) to adenine and the corresponding thioribose, 5'-methylthioribose and S-ribosylhomocysteine, respectively. Also cleaves 5'-deoxyadenosine, a toxic by-product of radical S-adenosylmethionine (SAM) enzymes, into 5-deoxyribose and adenine. This is 5'-methylthioadenosine/S-adenosylhomocysteine nucleosidase from Geobacillus kaustophilus (strain HTA426).